A 457-amino-acid polypeptide reads, in one-letter code: D-hydantoinase (457 aa).

His-57 and His-59 together coordinate Zn(2+). Ser-69 bears the Phosphoserine mark. A Zn(2+)-binding site is contributed by Lys-148. An N6-carboxylysine modification is found at Lys-148. Tyr-153 contacts substrate. Zn(2+)-binding residues include His-181 and His-237. Residue Thr-286 participates in substrate binding. Asp-313 lines the Zn(2+) pocket. Asn-335 contributes to the substrate binding site.

This sequence belongs to the metallo-dependent hydrolases superfamily. Hydantoinase/dihydropyrimidinase family. In terms of assembly, homodimer and homotetramer. Zn(2+) is required as a cofactor. Carboxylation allows a single lysine to coordinate two zinc ions.

Catalyzes the stereospecific hydrolysis of the cyclic amide bond of D-hydantoin derivatives. The chain is D-hydantoinase (hyuA) from Ralstonia pickettii (Burkholderia pickettii).